We begin with the raw amino-acid sequence, 282 residues long: Acetyl-coenzyme A carboxylase carboxyl transferase subunit beta (282 aa).

The region spanning 28-282 (IMTKCPSCRT…TKILDIHHVS (255 aa)) is the CoA carboxyltransferase N-terminal domain. Residues C32, C35, C51, and C54 each coordinate Zn(2+). The C4-type zinc finger occupies 32-54 (CPSCRTIMYTKELKKNLYVCDSC).

It belongs to the AccD/PCCB family. As to quaternary structure, acetyl-CoA carboxylase is a heterohexamer composed of biotin carboxyl carrier protein (AccB), biotin carboxylase (AccC) and two subunits each of ACCase subunit alpha (AccA) and ACCase subunit beta (AccD). The cofactor is Zn(2+).

The protein resides in the cytoplasm. It catalyses the reaction N(6)-carboxybiotinyl-L-lysyl-[protein] + acetyl-CoA = N(6)-biotinyl-L-lysyl-[protein] + malonyl-CoA. The protein operates within lipid metabolism; malonyl-CoA biosynthesis; malonyl-CoA from acetyl-CoA: step 1/1. In terms of biological role, component of the acetyl coenzyme A carboxylase (ACC) complex. Biotin carboxylase (BC) catalyzes the carboxylation of biotin on its carrier protein (BCCP) and then the CO(2) group is transferred by the transcarboxylase to acetyl-CoA to form malonyl-CoA. This is Acetyl-coenzyme A carboxylase carboxyl transferase subunit beta from Halalkalibacterium halodurans (strain ATCC BAA-125 / DSM 18197 / FERM 7344 / JCM 9153 / C-125) (Bacillus halodurans).